Reading from the N-terminus, the 328-residue chain is tRNA uridine(34) hydroxylase (328 aa).

Positions 130–224 constitute a Rhodanese domain; sequence LDKDTVVLDT…YGKDPEVQGE (95 aa). The active-site Cysteine persulfide intermediate is Cys-184.

This sequence belongs to the TrhO family.

It catalyses the reaction uridine(34) in tRNA + AH2 + O2 = 5-hydroxyuridine(34) in tRNA + A + H2O. Its function is as follows. Catalyzes oxygen-dependent 5-hydroxyuridine (ho5U) modification at position 34 in tRNAs. The protein is tRNA uridine(34) hydroxylase of Streptococcus pneumoniae (strain Taiwan19F-14).